The chain runs to 157 residues: Small ribosomal subunit protein uS7 (157 aa).

This sequence belongs to the universal ribosomal protein uS7 family. In terms of assembly, part of the 30S ribosomal subunit. Contacts proteins S9 and S11.

Functionally, one of the primary rRNA binding proteins, it binds directly to 16S rRNA where it nucleates assembly of the head domain of the 30S subunit. Is located at the subunit interface close to the decoding center, probably blocks exit of the E-site tRNA. This chain is Small ribosomal subunit protein uS7, found in Borrelia turicatae (strain 91E135).